We begin with the raw amino-acid sequence, 348 residues long: Cuticle collagen rol-6 (348 aa).

The segment at 76–348 (GYGATGVQPP…SARRHRKFQL (273 aa)) is disordered. Positions 120–137 (PGGGFPDGPFPNGGGPRG) are enriched in gly residues. Triple-helical region stretches follow at residues 152–178 (GPAG…DGKD), 196–258 (GPLG…DGER), 261–284 (GRPG…TGRD), and 288–323 (GQSG…PGKD). Low complexity predominate over residues 194–231 (PQGPLGPQGPNGAPGLRGMRGARGQPGRPGRDGNPGMP). The span at 297-306 (GLQGYGGAAG) shows a compositional bias: gly residues. Residues 322–338 (KDAEYCKCPGREGDAGR) show a composition bias toward basic and acidic residues. The span at 339–348 (SARRHRKFQL) shows a compositional bias: basic residues.

It belongs to the cuticular collagen family. As to quaternary structure, collagen polypeptide chains are complexed within the cuticle by disulfide bonds and other types of covalent cross-links. As to expression, localizes in stripes along the alae.

In terms of biological role, nematode cuticles are composed largely of collagen-like proteins. The cuticle functions both as an exoskeleton and as a barrier to protect the worm from its environment. May play a role in cuticle remodeling in response to the environment. Involved in body morphogenesis. This chain is Cuticle collagen rol-6 (rol-6), found in Caenorhabditis elegans.